Reading from the N-terminus, the 509-residue chain is Probable xyloglucan galactosyltransferase GT12 (509 aa).

Residues 1–3 (MMK) lie on the Cytoplasmic side of the membrane. A helical; Signal-anchor for type II membrane protein transmembrane segment spans residues 4-24 (PVPKLWVVISSAFVFCLLVLF). Over 25–509 (QINKSDLIEA…KLEIIHEKTA (485 aa)) the chain is Lumenal. N-linked (GlcNAc...) asparagine glycosylation is found at N27, N59, N65, N169, N170, N195, N257, and N416.

This sequence belongs to the glycosyltransferase 47 family. Expressed in pollen grains.

It is found in the golgi apparatus membrane. Functions in xyloglucan synthesis by adding side chains to the xylosylated glucan backbone. Involved in the galactosylation of hemicellulose xyloglucan. The protein is Probable xyloglucan galactosyltransferase GT12 of Arabidopsis thaliana (Mouse-ear cress).